The sequence spans 240 residues: MRSGVIAQKVGMTRVFTETGEHIPVTVLKLGNCQVLGHRTSEKNGYTALQLGSGSRKTVYMPKAERGQFAAAKVEPKRKVAEFRVSEDSMIPIGAEIQADHFVVGQFVDVTGTSVGKGFAGGIKRWNFGGLRATHGVSVSHRSIGSTGGRQDPGKTFKNKKMPGHMGVDRITTLNLRVVQLDVERGLILVEGAVPGSKGGWIAVRDAVKKALPADAPKPGKFRLADGGEQAAPAAEQEGV.

Disordered regions lie at residues Val139–Gly164 and Asp215–Val240. Gln151 is subject to N5-methylglutamine. The segment covering Ala225 to Val240 has biased composition (low complexity).

This sequence belongs to the universal ribosomal protein uL3 family. As to quaternary structure, part of the 50S ribosomal subunit. Forms a cluster with proteins L14 and L19. In terms of processing, methylated by PrmB.

In terms of biological role, one of the primary rRNA binding proteins, it binds directly near the 3'-end of the 23S rRNA, where it nucleates assembly of the 50S subunit. The polypeptide is Large ribosomal subunit protein uL3 (Rhodopseudomonas palustris (strain BisA53)).